The sequence spans 460 residues: Oxysterols receptor LXR-beta (460 aa).

A compositionally biased stretch (low complexity) spans 1-14; sequence MSSPTTSSLDTPLP. Residues 1–78 form a disordered region; that stretch reads MSSPTTSSLD…PERKRKKGPA (78 aa). The segment at 1–85 is transactivation AF-1; required for ligand-independent transactivation function; that stretch reads MSSPTTSSLD…GPAPKMLGHE (85 aa). Positions 36 to 45 are enriched in pro residues; it reads EPWPGGPDPD. Positions 84–161 form a DNA-binding region, nuclear receptor; the sequence is HELCRVCGDK…AGMREQCVLS (78 aa). 2 NR C4-type zinc fingers span residues 87-107 and 125-149; these read CRVC…CEGC and CRGG…LRKC. Residues 169–216 form a disordered region; that stretch reads KIRKQQQESQSQSQSPVGPQGSSSSASGPGASPGGSEAGSQGSGEGEG. The segment covering 175 to 198 has biased composition (low complexity); sequence QESQSQSQSPVGPQGSSSSASGPG. Residues 199–215 show a composition bias toward gly residues; it reads ASPGGSEAGSQGSGEGE. A transactivation AF-2; required for ligand-dependent transactivation function; mediates interaction with CCAR2 region spans residues 219 to 460; sequence LTAAQELMIQ…LLSEIWDVHE (242 aa). An NR LBD domain is found at 222 to 460; it reads AQELMIQQLV…LLSEIWDVHE (239 aa). Residues lysine 409 and lysine 447 each participate in a glycyl lysine isopeptide (Lys-Gly) (interchain with G-Cter in SUMO2) cross-link.

Belongs to the nuclear hormone receptor family. NR1 subfamily. Forms a heterodimer with RXR. Interacts with CCAR2 (via N-terminus) in a ligand-independent manner. Interacts (when sumoylated) with GPS2; interaction with GPS2 onto hepatic acute phase protein promoters prevents N-Cor corepressor complex dissociation. Interacts with ABCA12 and ABCA1; this interaction is required for ABCA1 localization to the cell surface and is necessary for its normal activity and stability. Sumoylated by SUMO2 at Lys-409 and Lys-447 during the hepatic acute phase response, leading to promote interaction with GPS2 and prevent N-Cor corepressor complex dissociation. As to expression, ubiquitous.

It localises to the nucleus. In terms of biological role, nuclear receptor that exhibits a ligand-dependent transcriptional activation activity. Binds preferentially to double-stranded oligonucleotide direct repeats having the consensus half-site sequence 5'-AGGTCA-3' and 4-nt spacing (DR-4). Regulates cholesterol uptake through MYLIP-dependent ubiquitination of LDLR, VLDLR and LRP8; DLDLR and LRP8. Interplays functionally with RORA for the regulation of genes involved in liver metabolism. Induces LPCAT3-dependent phospholipid remodeling in endoplasmic reticulum (ER) membranes of hepatocytes, driving SREBF1 processing and lipogenesis. Via LPCAT3, triggers the incorporation of arachidonate into phosphatidylcholines of ER membranes, increasing membrane dynamics and enabling triacylglycerols transfer to nascent very low-density lipoprotein (VLDL) particles. Via LPCAT3 also counteracts lipid-induced ER stress response and inflammation, likely by modulating SRC kinase membrane compartmentalization and limiting the synthesis of lipid inflammatory mediators. Plays an anti-inflammatory role during the hepatic acute phase response by acting as a corepressor: inhibits the hepatic acute phase response by preventing dissociation of the N-Cor corepressor complex. The sequence is that of Oxysterols receptor LXR-beta (NR1H2) from Homo sapiens (Human).